A 232-amino-acid chain; its full sequence is Ribose-5-phosphate isomerase A (232 aa).

Substrate is bound by residues 28–31 (TGST), 83–86 (DGAD), and 96–99 (KGGG). E105 acts as the Proton acceptor in catalysis. K123 lines the substrate pocket.

This sequence belongs to the ribose 5-phosphate isomerase family. As to quaternary structure, homodimer.

It carries out the reaction aldehydo-D-ribose 5-phosphate = D-ribulose 5-phosphate. It participates in carbohydrate degradation; pentose phosphate pathway; D-ribose 5-phosphate from D-ribulose 5-phosphate (non-oxidative stage): step 1/1. Its function is as follows. Catalyzes the reversible conversion of ribose-5-phosphate to ribulose 5-phosphate. This chain is Ribose-5-phosphate isomerase A, found in Allorhizobium ampelinum (strain ATCC BAA-846 / DSM 112012 / S4) (Agrobacterium vitis (strain S4)).